Here is a 139-residue protein sequence, read N- to C-terminus: Small ribosomal subunit protein uS12 (139 aa).

A disordered region spans residues 1–21 (MSTVSQLIKKRRSSKTSKTKA). Residues 8 to 18 (IKKRRSSKTSK) are compositionally biased toward basic residues.

The protein belongs to the universal ribosomal protein uS12 family. In terms of assembly, part of the 30S ribosomal subunit. Contacts proteins S8 and S17. May interact with IF1 in the 30S initiation complex.

Functionally, with S4 and S5 plays an important role in translational accuracy. Interacts with and stabilizes bases of the 16S rRNA that are involved in tRNA selection in the A site and with the mRNA backbone. Located at the interface of the 30S and 50S subunits, it traverses the body of the 30S subunit contacting proteins on the other side and probably holding the rRNA structure together. The combined cluster of proteins S8, S12 and S17 appears to hold together the shoulder and platform of the 30S subunit. This chain is Small ribosomal subunit protein uS12, found in Onion yellows phytoplasma (strain OY-M).